A 98-amino-acid chain; its full sequence is ESAT-6-like protein EsxM (98 aa).

This sequence belongs to the WXG100 family. CFP-10 subfamily.

It is found in the secreted. This Mycobacterium bovis (strain ATCC BAA-935 / AF2122/97) protein is ESAT-6-like protein EsxM (esxM).